We begin with the raw amino-acid sequence, 731 residues long: DNA gyrase subunit B, chloroplastic/mitochondrial (731 aa).

Residues 512 to 619 enclose the Toprim domain; the sequence is AEIFIVEGDS…RYQRALFEEG (108 aa). Positions 518, 592, and 594 each coordinate Mg(2+).

It belongs to the type II topoisomerase GyrB family. In terms of assembly, made up of two chains. The A chain is responsible for DNA breakage and rejoining; the B chain catalyzes ATP hydrolysis. Requires Mg(2+) as cofactor. Mn(2+) serves as cofactor. The cofactor is Ca(2+). In terms of tissue distribution, ubiquitous.

Its subcellular location is the plastid. It localises to the chloroplast. The protein resides in the mitochondrion. It catalyses the reaction ATP-dependent breakage, passage and rejoining of double-stranded DNA.. Its function is as follows. Seems to play a critical role in chloroplast nucleoid partitioning by regulating DNA topology. A type II topoisomerase that negatively supercoils closed circular double-stranded DNA in an ATP-dependent manner. This is DNA gyrase subunit B, chloroplastic/mitochondrial (GYRB) from Nicotiana benthamiana.